A 2117-amino-acid polypeptide reads, in one-letter code: Tudor domain-containing 6 (2117 aa).

5 Tudor domains span residues 62–118 (DGNP…FFYL), 291–350 (AENL…FFRM), 527–584 (KPVV…FQQL), 757–816 (EPLL…FLKM), and 974–1030 (PQTF…AGDI). The segment at 1125–1216 (ASACKKESST…SSKPEVVKPK (92 aa)) is disordered. Residues 1127–1152 (ACKKESSTGPKRDAIDQVPKSRESHA) are compositionally biased toward basic and acidic residues. Composition is skewed to polar residues over residues 1153–1174 (IQRSNDVASKQPQSRWGFSTNG) and 1181–1209 (DSGTINNCQKQPELRTSQGNLRHPCTSSK). Tudor domains are found at residues 1282–1340 (DIHE…FASF) and 1485–1543 (CMPV…LSDV).

Interacts (via Tudor domain) with buc (when dimethylated on arginine residues); and may be responsible for recruitment of different protein complexes to germ plasm.

Its subcellular location is the cytoplasm. Functionally, tudor domain-containing protein involved in germ cell development, more specifically the formation of chromatoid body (during spermiogenesis), Balbiani body (during oogenesis), germ plasm (upon fertilization), and for proper miRNA expression and spliceosome maturation. Required for Balbiani body and germ plasm formation and mobility through interaction with dimethylated arginines in the prion-like protein Bucky ball (buc). Coordinates transcript deposition into future primordial germ cells. Interacts with known germ plasm mRNAs such as vasa, dazl, nanos3 and hook2. In Danio rerio (Zebrafish), this protein is Tudor domain-containing 6.